The primary structure comprises 187 residues: Ribonuclease HII (187 aa).

The RNase H type-2 domain occupies 1 to 187 (MIILGIDEAG…YKPVQVLLNE (187 aa)). A divalent metal cation-binding residues include Asp7, Glu8, and Asp99.

This sequence belongs to the RNase HII family. The cofactor is Mn(2+). Mg(2+) is required as a cofactor.

Its subcellular location is the cytoplasm. The catalysed reaction is Endonucleolytic cleavage to 5'-phosphomonoester.. Functionally, endonuclease that specifically degrades the RNA of RNA-DNA hybrids. In Francisella tularensis subsp. mediasiatica (strain FSC147), this protein is Ribonuclease HII.